Consider the following 784-residue polypeptide: Ribosome biogenesis protein BOP1 homolog (784 aa).

Basic residues predominate over residues 1–11 (MTKKLALKRRG). The interval 1 to 159 (MTKKLALKRR…DSDTSDEEDI (159 aa)) is disordered. 4 stretches are compositionally biased toward acidic residues: residues 27-36 (SENEEEEEDL), 45-54 (EDSTDDEGID), 62-73 (SEELQFESDEEG), and 84-111 (AEED…EDEE). Basic and acidic residues-rich tracts occupy residues 112 to 123 (KDSKSKQTDDKP) and 138 to 148 (LPKRDSSKPEY). The span at 149–158 (QDSDTSDEED) shows a compositional bias: acidic residues. WD repeat units lie at residues 445–486 (GHTD…RTIE), 488–526 (DEVV…KVLV), 570–612 (THFK…SQIP), 615–653 (KSKG…LVKK), 656–695 (TNSK…KPYQ), 699–738 (LHRN…DLLQ), and 754–784 (RDEF…RLYT).

This sequence belongs to the WD repeat BOP1/ERB1 family.

The protein localises to the nucleus. It localises to the nucleolus. Its subcellular location is the nucleoplasm. Required for maturation of ribosomal RNAs and formation of the large ribosomal subunit. This Drosophila melanogaster (Fruit fly) protein is Ribosome biogenesis protein BOP1 homolog.